Reading from the N-terminus, the 188-residue chain is PRA1 family protein 3 (188 aa).

M1 is subject to N-acetylmethionine. At 1–35 (MDVNIAPLRAWDDFFPGSDRFAQPDFRDISKWNNR) the chain is on the cytoplasmic side. 2 helical membrane-spanning segments follow: residues 36–56 (VVSN…MMIS) and 57–77 (VVGF…VLVF). The Cytoplasmic segment spans residues 78-93 (TGFVWAAHNKDALRRL). Helical transmembrane passes span 94-114 (KKRY…FLIS) and 115-135 (MFGG…LMFI). The required for homodimer formation and heterodimer formation with ARL6IP1 stretch occupies residues 103 to 117 (MVVMLASYFLISMFG). Over 136-188 (HASLRLRNLKNKLENKMEGIGLKRTPMGIVLDALEQQEEGINRLTDYISKVKE) the chain is Cytoplasmic. Positions 136–188 (HASLRLRNLKNKLENKMEGIGLKRTPMGIVLDALEQQEEGINRLTDYISKVKE) are targeting to endoplasmic reticulum membrane.

Belongs to the PRA1 family. As to quaternary structure, homodimer. Heterodimer with ARL6IP1. Forms multimers. Interacts with ARL6. Interacts with prenylated RAB1A and RAB3A. Interacts with SLC1A1/EAAC1. Interacts with RTN2 (via first transmembrane domain). Does not interact with VAMP1, VAMP2 or VAMP3.

It is found in the endoplasmic reticulum membrane. The protein localises to the cell membrane. The protein resides in the cytoplasm. It localises to the cytoskeleton. Functionally, regulates intracellular concentrations of taurine and glutamate. Negatively modulates SLC1A1/EAAC1 glutamate transport activity by decreasing its affinity for glutamate in a PKC activity-dependent manner. Plays a role in the retention of SLC1A1/EAAC1 in the endoplasmic reticulum. This is PRA1 family protein 3 (ARL6IP5) from Macaca fascicularis (Crab-eating macaque).